Consider the following 964-residue polypeptide: Glycine dehydrogenase (decarboxylating) (964 aa).

Positions 1–11 (MNSTLQNQTKT) are enriched in polar residues. Positions 1-21 (MNSTLQNQTKTNLEKVGTDPL) are disordered. Lys-713 bears the N6-(pyridoxal phosphate)lysine mark.

It belongs to the GcvP family. The glycine cleavage system is composed of four proteins: P, T, L and H. Requires pyridoxal 5'-phosphate as cofactor.

The catalysed reaction is N(6)-[(R)-lipoyl]-L-lysyl-[glycine-cleavage complex H protein] + glycine + H(+) = N(6)-[(R)-S(8)-aminomethyldihydrolipoyl]-L-lysyl-[glycine-cleavage complex H protein] + CO2. Functionally, the glycine cleavage system catalyzes the degradation of glycine. The P protein binds the alpha-amino group of glycine through its pyridoxal phosphate cofactor; CO(2) is released and the remaining methylamine moiety is then transferred to the lipoamide cofactor of the H protein. The sequence is that of Glycine dehydrogenase (decarboxylating) from Leptospira interrogans serogroup Icterohaemorrhagiae serovar Lai (strain 56601).